The primary structure comprises 305 residues: Delta-9 acyl-lipid desaturase 1 (305 aa).

The interval 1 to 20 is disordered; sequence MSLSASEKEENNKKMAADKA. Transmembrane regions (helical) follow at residues 39 to 59 and 60 to 80; these read IVKAFASLFVHFLCLLAPFNF and TWPALRVALIVYTVGGLGITV. Fe cation contacts are provided by H83, H88, H120, H123, and H124. The Histidine box-1 signature appears at 83-88; that stretch reads HRNLAH. The Histidine box-2 motif lies at 120-124; that stretch reads HRYHH. Residues 180-200 form a helical membrane-spanning segment; sequence VLYHILTFGFLLYYFGGLSFL. Positions 223, 252, 255, and 256 each coordinate Fe cation. The Histidine box-3 motif lies at 252 to 256; the sequence is HNNHH. A helical transmembrane segment spans residues 268 to 288; that stretch reads WWQIDISWYIVRFLEIIGLAT.

This sequence belongs to the fatty acid desaturase type 1 family. Requires Fe cation as cofactor. As to expression, strongly expressed in inflorescence meristems, leaves, and flowers, and weakly in roots and seedpods.

The protein resides in the endoplasmic reticulum membrane. The protein localises to the plastid. It localises to the chloroplast membrane. Its pathway is lipid metabolism; polyunsaturated fatty acid biosynthesis. Its function is as follows. Involved in delta-9 desaturation of fatty acids. Involved in the production of very-long-chain fatty acids (VLCFAs). May desaturate chloroplastic monogalactosyl diacylglycerol (MGDG) and alter chloroplast membrane fluidity, which is required to prime a cold acclimation response. The sequence is that of Delta-9 acyl-lipid desaturase 1 from Arabidopsis thaliana (Mouse-ear cress).